Consider the following 265-residue polypeptide: GTP cyclohydrolase FolE2 (265 aa).

It belongs to the GTP cyclohydrolase IV family.

The enzyme catalyses GTP + H2O = 7,8-dihydroneopterin 3'-triphosphate + formate + H(+). The protein operates within cofactor biosynthesis; 7,8-dihydroneopterin triphosphate biosynthesis; 7,8-dihydroneopterin triphosphate from GTP: step 1/1. In terms of biological role, converts GTP to 7,8-dihydroneopterin triphosphate. The polypeptide is GTP cyclohydrolase FolE2 (Bordetella bronchiseptica (strain ATCC BAA-588 / NCTC 13252 / RB50) (Alcaligenes bronchisepticus)).